The primary structure comprises 1015 residues: DNA polymerase catalytic subunit (1015 aa).

It belongs to the DNA polymerase type-B family. As to quaternary structure, forms a complex with the ssDNA-binding protein BALF2, the DNA polymerase processivity factor BMRF1, and the alkaline exonuclease BGLF5. Interacts with the putative helicase-primase complex composed of BBLF4, BSLF1 and BBLF2/3 proteins; these interactions may coordinate leading and lagging strand DNA synthesis at the replication fork.

It is found in the host nucleus. It catalyses the reaction DNA(n) + a 2'-deoxyribonucleoside 5'-triphosphate = DNA(n+1) + diphosphate. Functionally, replicates viral genomic DNA in the late phase of lytic infection, producing long concatemeric DNA. The replication complex is composed of six viral proteins: the DNA polymerase, processivity factor, primase, primase-associated factor, helicase, and ssDNA-binding protein. This is DNA polymerase catalytic subunit from Epstein-Barr virus (strain B95-8) (HHV-4).